Here is a 420-residue protein sequence, read N- to C-terminus: Serine--tRNA ligase (420 aa).

L-serine is bound at residue 227 to 229 (TSE). ATP-binding positions include 258–260 (RRE) and Val274. Residue Glu281 coordinates L-serine. 345 to 348 (EVTS) contacts ATP. L-serine is bound at residue Thr379.

The protein belongs to the class-II aminoacyl-tRNA synthetase family. Type-1 seryl-tRNA synthetase subfamily. In terms of assembly, homodimer. The tRNA molecule binds across the dimer.

It localises to the cytoplasm. It catalyses the reaction tRNA(Ser) + L-serine + ATP = L-seryl-tRNA(Ser) + AMP + diphosphate + H(+). The catalysed reaction is tRNA(Sec) + L-serine + ATP = L-seryl-tRNA(Sec) + AMP + diphosphate + H(+). Its pathway is aminoacyl-tRNA biosynthesis; selenocysteinyl-tRNA(Sec) biosynthesis; L-seryl-tRNA(Sec) from L-serine and tRNA(Sec): step 1/1. Its function is as follows. Catalyzes the attachment of serine to tRNA(Ser). Is also able to aminoacylate tRNA(Sec) with serine, to form the misacylated tRNA L-seryl-tRNA(Sec), which will be further converted into selenocysteinyl-tRNA(Sec). This chain is Serine--tRNA ligase, found in Acidothermus cellulolyticus (strain ATCC 43068 / DSM 8971 / 11B).